Reading from the N-terminus, the 625-residue chain is DELLA protein SLR1 (625 aa).

Residues 1-34 (MKREYQEAGGSSGGGSSADMGSCKDKVMAGAAGE) form a disordered region. Positions 39 to 43 (DELLA) match the DELLA motif motif. A disordered region spans residues 167 to 208 (TADPSAADSARDTKRMRTGGGSTSSSSSSSSSLGGGASRGSV). Over residues 189–198 (TSSSSSSSSS) the composition is skewed to low complexity. Positions 232–621 (VDTQEAGIRL…RPLIATSAWR (390 aa)) constitute a GRAS domain. The tract at residues 239-294 (IRLVHALLACAEAVQQENFAAAEALVKQIPTLAASQGGAMRKVAAYFGEALARRVY) is leucine repeat I (LRI). Residues 241–278 (LVHALLACAEAVQQENFAAAEALVKQIPTLAASQGGAM) are required for possible homodimerization. The LxCxE motif motif lies at 246-250 (LACAE). The VHIID stretch occupies residues 313 to 378 (HAHFYESCPY…GGPPSFRLTG (66 aa)). A VHIID motif is present at residues 344-348 (VHVVD). Residues 392-431 (QVGWKLAQFAHTIRVDFQYRGLVAATLADLEPFMLQPEGE) form a leucine repeat II (LRII) region. A PFYRE region spans residues 441-542 (IAVNSVFELH…EVYLGRQICN (102 aa)). The short motif at 449-453 (LHRLL) is the LXXLL motif element. The interval 545–621 (ACEGAERTER…RPLIATSAWR (77 aa)) is SAW.

It belongs to the GRAS family. DELLA subfamily.

In terms of biological role, probable transcriptional regulator that acts as a repressor of the gibberellin (GA) signaling pathway. Probably acts by participating in large multiprotein complexes that repress transcription of GA-inducible genes. Upon GA application, it is degraded by the proteasome, allowing the GA signaling pathway. In contrast, its overexpression prevents the GA signaling pathway and induces a dwarf phenotype. The protein is DELLA protein SLR1 of Oryza sativa subsp. indica (Rice).